The following is a 438-amino-acid chain: L-cysteine:1D-myo-inositol 2-amino-2-deoxy-alpha-D-glucopyranoside ligase (438 aa).

The interval 1-27 is disordered; sequence MKSWSSRPVPELPGTGTAPRVHDTSTG. Cysteine 44 is a Zn(2+) binding site. L-cysteinyl-5'-AMP contacts are provided by residues 44–47, threonine 59, and 82–84; these read CGIT and NVT. The short motif at 46 to 56 is the 'HIGH' region element; that stretch reads ITPYDATHMGH. The short motif at 208–213 is the 'ERGGDP' region element; it reads DHGGDP. Tryptophan 249 contributes to the L-cysteinyl-5'-AMP binding site. Residue cysteine 253 participates in Zn(2+) binding. 271 to 273 contributes to the L-cysteinyl-5'-AMP binding site; the sequence is GSD. Zn(2+) is bound at residue histidine 278. Position 304 (valine 304) interacts with L-cysteinyl-5'-AMP. The 'KMSKS' region signature appears at 310-314; it reads KMSKS.

It belongs to the class-I aminoacyl-tRNA synthetase family. MshC subfamily. As to quaternary structure, monomer. Zn(2+) is required as a cofactor.

It catalyses the reaction 1D-myo-inositol 2-amino-2-deoxy-alpha-D-glucopyranoside + L-cysteine + ATP = 1D-myo-inositol 2-(L-cysteinylamino)-2-deoxy-alpha-D-glucopyranoside + AMP + diphosphate + H(+). In terms of biological role, catalyzes the ATP-dependent condensation of GlcN-Ins and L-cysteine to form L-Cys-GlcN-Ins. The sequence is that of L-cysteine:1D-myo-inositol 2-amino-2-deoxy-alpha-D-glucopyranoside ligase from Kocuria rhizophila (strain ATCC 9341 / DSM 348 / NBRC 103217 / DC2201).